The primary structure comprises 188 residues: Probable nicotinate-nucleotide adenylyltransferase (188 aa).

This sequence belongs to the NadD family.

The catalysed reaction is nicotinate beta-D-ribonucleotide + ATP + H(+) = deamido-NAD(+) + diphosphate. It participates in cofactor biosynthesis; NAD(+) biosynthesis; deamido-NAD(+) from nicotinate D-ribonucleotide: step 1/1. In terms of biological role, catalyzes the reversible adenylation of nicotinate mononucleotide (NaMN) to nicotinic acid adenine dinucleotide (NaAD). The sequence is that of Probable nicotinate-nucleotide adenylyltransferase from Salinispora tropica (strain ATCC BAA-916 / DSM 44818 / JCM 13857 / NBRC 105044 / CNB-440).